The following is a 1098-amino-acid chain: Ran-binding protein 16 (1098 aa).

Belongs to the exportin family. In terms of assembly, binds to nucleoporins and the GTP-bound form of Ran.

The protein localises to the cytoplasm. It localises to the nucleus. Its function is as follows. May function as a nuclear transport receptor. In Drosophila melanogaster (Fruit fly), this protein is Ran-binding protein 16 (Ranbp16).